A 288-amino-acid chain; its full sequence is Homoserine kinase (288 aa).

Pro78–Ser88 serves as a coordination point for ATP.

This sequence belongs to the GHMP kinase family. Homoserine kinase subfamily.

Its subcellular location is the cytoplasm. The catalysed reaction is L-homoserine + ATP = O-phospho-L-homoserine + ADP + H(+). It functions in the pathway amino-acid biosynthesis; L-threonine biosynthesis; L-threonine from L-aspartate: step 4/5. Functionally, catalyzes the ATP-dependent phosphorylation of L-homoserine to L-homoserine phosphate. This Streptococcus agalactiae serotype V (strain ATCC BAA-611 / 2603 V/R) protein is Homoserine kinase.